Reading from the N-terminus, the 453-residue chain is Bifunctional protein GlmU (453 aa).

The pyrophosphorylase stretch occupies residues 1–228 (MPHWAAVIMA…VHEALGINSR (228 aa)). UDP-N-acetyl-alpha-D-glucosamine contacts are provided by residues K23, Q73, 78–79 (GT), 100–102 (SGD), G139, E153, N168, and N226. D102 contributes to the Mg(2+) binding site. Mg(2+) is bound at residue N226. The segment at 229 to 249 (AQLAAAEDVARQRILSYWMEE) is linker. Positions 250 to 453 (GVTIIDPRST…IENWVRNKKK (204 aa)) are N-acetyltransferase. UDP-N-acetyl-alpha-D-glucosamine is bound by residues R331 and K349. The Proton acceptor role is filled by H361. Y364 and N375 together coordinate UDP-N-acetyl-alpha-D-glucosamine. Residues A378, 384–385 (NY), S403, A421, and R438 each bind acetyl-CoA.

The protein in the N-terminal section; belongs to the N-acetylglucosamine-1-phosphate uridyltransferase family. It in the C-terminal section; belongs to the transferase hexapeptide repeat family. As to quaternary structure, homotrimer. The cofactor is Mg(2+).

It localises to the cytoplasm. The enzyme catalyses alpha-D-glucosamine 1-phosphate + acetyl-CoA = N-acetyl-alpha-D-glucosamine 1-phosphate + CoA + H(+). It catalyses the reaction N-acetyl-alpha-D-glucosamine 1-phosphate + UTP + H(+) = UDP-N-acetyl-alpha-D-glucosamine + diphosphate. The protein operates within nucleotide-sugar biosynthesis; UDP-N-acetyl-alpha-D-glucosamine biosynthesis; N-acetyl-alpha-D-glucosamine 1-phosphate from alpha-D-glucosamine 6-phosphate (route II): step 2/2. It participates in nucleotide-sugar biosynthesis; UDP-N-acetyl-alpha-D-glucosamine biosynthesis; UDP-N-acetyl-alpha-D-glucosamine from N-acetyl-alpha-D-glucosamine 1-phosphate: step 1/1. It functions in the pathway bacterial outer membrane biogenesis; LPS lipid A biosynthesis. Functionally, catalyzes the last two sequential reactions in the de novo biosynthetic pathway for UDP-N-acetylglucosamine (UDP-GlcNAc). The C-terminal domain catalyzes the transfer of acetyl group from acetyl coenzyme A to glucosamine-1-phosphate (GlcN-1-P) to produce N-acetylglucosamine-1-phosphate (GlcNAc-1-P), which is converted into UDP-GlcNAc by the transfer of uridine 5-monophosphate (from uridine 5-triphosphate), a reaction catalyzed by the N-terminal domain. The polypeptide is Bifunctional protein GlmU (Desulfitobacterium hafniense (strain DSM 10664 / DCB-2)).